Consider the following 567-residue polypeptide: Wee1-like protein kinase 2 (567 aa).

2 stretches are compositionally biased toward basic and acidic residues: residues 1–12 and 26–36; these read MDDSSINKELKQ and EGQKEAPESRE. Disordered stretches follow at residues 1 to 103 and 170 to 191; these read MDDS…DSRS and RSNG…EGKV. Position 77 is a phosphoserine (Ser-77). The Nuclear localization signal motif lies at 174-176; the sequence is KRK. The 280-residue stretch at 215-494 folds into the Protein kinase domain; that stretch reads FLEVEKIGVG…ARSRVLRPSL (280 aa). ATP contacts are provided by residues 221 to 229 and Lys-244; that span reads IGVGEFGTV. The Nuclear export signal motif lies at 318–332; sequence KLKDILLQISLGLKY. Asp-342 serves as the catalytic Proton acceptor. Mg(2+) contacts are provided by Asn-347 and Asp-384. The stretch at 497 to 523 forms a coiled coil; the sequence is AEELQQQLNLEKSKTATLERELREAQQ. A disordered region spans residues 502-567; it reads QQLNLEKSKT…SSFTCGKSSP (66 aa). Over residues 507–520 the composition is skewed to basic and acidic residues; it reads EKSKTATLERELRE. Positions 555–567 are enriched in polar residues; that stretch reads AKSSSFTCGKSSP.

Belongs to the protein kinase superfamily. Ser/Thr protein kinase family. WEE1 subfamily. In terms of processing, phosphorylation leads to increase its activity.

The protein resides in the nucleus. It catalyses the reaction L-tyrosyl-[protein] + ATP = O-phospho-L-tyrosyl-[protein] + ADP + H(+). In terms of biological role, oocyte-specific protein tyrosine kinase that phosphorylates and inhibits CDK1 and acts as a key regulator of meiosis during both prophase I and metaphase II. Required to maintain meiotic arrest in oocytes during the germinal vesicle (GV) stage, a long period of quiescence at dictyate prophase I, by phosphorylating CDK1 at 'Tyr-15', leading to inhibit CDK1 activity and prevent meiotic reentry. Also required for metaphase II exit during egg activation by phosphorylating CDK1 at 'Tyr-15', to ensure exit from meiosis in oocytes and promote pronuclear formation. The chain is Wee1-like protein kinase 2 (WEE2) from Canis lupus familiaris (Dog).